A 297-amino-acid chain; its full sequence is Ribosomal protein L11 methyltransferase (297 aa).

The S-adenosyl-L-methionine site is built by threonine 139, glycine 164, aspartate 186, and asparagine 233.

This sequence belongs to the methyltransferase superfamily. PrmA family.

Its subcellular location is the cytoplasm. It carries out the reaction L-lysyl-[protein] + 3 S-adenosyl-L-methionine = N(6),N(6),N(6)-trimethyl-L-lysyl-[protein] + 3 S-adenosyl-L-homocysteine + 3 H(+). In terms of biological role, methylates ribosomal protein L11. The sequence is that of Ribosomal protein L11 methyltransferase from Trichodesmium erythraeum (strain IMS101).